The primary structure comprises 146 residues: UPF0260 protein Sbal_1871 (146 aa).

This sequence belongs to the UPF0260 family.

The chain is UPF0260 protein Sbal_1871 from Shewanella baltica (strain OS155 / ATCC BAA-1091).